Here is a 1053-residue protein sequence, read N- to C-terminus: Protein CLEC16A (1053 aa).

The 148-residue stretch at 51–198 folds into the FPL domain; it reads IRSITEILIW…AVRTITLNVY (148 aa). Disordered regions lie at residues 375 to 434, 452 to 471, and 892 to 983; these read SLEM…GESE, STSV…AATC, and SSPS…SPSL. Residues 381–392 are compositionally biased toward basic residues; it reads HKGKRRVQKRPN. Positions 892-938 are enriched in low complexity; sequence SSPSLSSQSPPSASGSPSGSGSTSHCDSGGTSSSSTPSTAQSPADAP.

The protein belongs to the CLEC16A/gop-1 family. In terms of assembly, interacts with RNF41/NRDP1. As to expression, almost exclusively expressed in immune cells, including dendritic cells, B-lymphocytes and natural killer cells.

The protein localises to the endosome membrane. The protein resides in the lysosome membrane. Its function is as follows. Regulator of mitophagy through the upstream regulation of the RNF41/NRDP1-PRKN pathway. Mitophagy is a selective form of autophagy necessary for mitochondrial quality control. The RNF41/NRDP1-PRKN pathway regulates autophagosome-lysosome fusion during late mitophagy. May protect RNF41/NRDP1 from proteasomal degradation, RNF41/NRDP1 which regulates proteasomal degradation of PRKN. Plays a key role in beta cells functions by regulating mitophagy/autophagy and mitochondrial health. The chain is Protein CLEC16A from Homo sapiens (Human).